We begin with the raw amino-acid sequence, 603 residues long: Elongation factor 4 (603 aa).

The tr-type G domain occupies 7–189 (SRLRNFCIIA…AVVDRIPSPK (183 aa)). GTP is bound by residues 19 to 24 (DHGKST) and 136 to 139 (NKVD).

The protein belongs to the TRAFAC class translation factor GTPase superfamily. Classic translation factor GTPase family. LepA subfamily.

It is found in the cell inner membrane. The enzyme catalyses GTP + H2O = GDP + phosphate + H(+). In terms of biological role, required for accurate and efficient protein synthesis under certain stress conditions. May act as a fidelity factor of the translation reaction, by catalyzing a one-codon backward translocation of tRNAs on improperly translocated ribosomes. Back-translocation proceeds from a post-translocation (POST) complex to a pre-translocation (PRE) complex, thus giving elongation factor G a second chance to translocate the tRNAs correctly. Binds to ribosomes in a GTP-dependent manner. In Prochlorococcus marinus (strain NATL2A), this protein is Elongation factor 4.